A 194-amino-acid chain; its full sequence is ATP-dependent Clp protease proteolytic subunit (194 aa).

Ser98 acts as the Nucleophile in catalysis. The active site involves His123.

The protein belongs to the peptidase S14 family. In terms of assembly, fourteen ClpP subunits assemble into 2 heptameric rings which stack back to back to give a disk-like structure with a central cavity, resembling the structure of eukaryotic proteasomes.

It is found in the cytoplasm. It carries out the reaction Hydrolysis of proteins to small peptides in the presence of ATP and magnesium. alpha-casein is the usual test substrate. In the absence of ATP, only oligopeptides shorter than five residues are hydrolyzed (such as succinyl-Leu-Tyr-|-NHMec, and Leu-Tyr-Leu-|-Tyr-Trp, in which cleavage of the -Tyr-|-Leu- and -Tyr-|-Trp bonds also occurs).. In terms of biological role, cleaves peptides in various proteins in a process that requires ATP hydrolysis. Has a chymotrypsin-like activity. Plays a major role in the degradation of misfolded proteins. The protein is ATP-dependent Clp protease proteolytic subunit of Sodalis glossinidius (strain morsitans).